Here is a 469-residue protein sequence, read N- to C-terminus: CBL-interacting serine/threonine-protein kinase 16 (469 aa).

The Protein kinase domain maps to 15–278 (YNIGRLLGTG…MSEIKMIPWF (264 aa)). Residues 21 to 29 (LGTGNFAKV) and Lys44 contribute to the ATP site. Asp139 (proton acceptor) is an active-site residue. An activation loop region spans residues 157–193 (DFGLSALMMPEGLGGRRGSSDDLLHTRCGTPAYVAPE). Ser161 carries the phosphoserine modification. Thr182 bears the Phosphothreonine mark. Positions 290 to 320 (IDETIPSPPEPPTKKKKKDLNEKEDDGASPR) are disordered. In terms of domain architecture, NAF spans 317–342 (ASPRSFNAFQFITSMSSGFDLSNLFE). Residues 346–376 (KPKRMFTSKFPAKSVKERLETAAREMDMRVK) form a PPI region. The tract at residues 447–469 (DDEDDVTTNDNVDTNDNKINNVS) is disordered. Over residues 454 to 469 (TNDNVDTNDNKINNVS) the composition is skewed to low complexity.

This sequence belongs to the protein kinase superfamily. CAMK Ser/Thr protein kinase family. SNF1 subfamily. As to quaternary structure, part of a K(+)-channel calcium-sensing kinase/phosphatase complex composed by a calcium sensor CBL (CBL1, CBL2, CBL3 or CBL9), a kinase CIPK (CIPK6, CIPK16 or CIPK23), a phosphatase PP2C (AIP1) and a K(+)-channel (AKT1). Interacts with AKT1, CBL1, CBL2, CBL3 and CBL9. It depends on Mn(2+) as a cofactor.

It catalyses the reaction L-seryl-[protein] + ATP = O-phospho-L-seryl-[protein] + ADP + H(+). It carries out the reaction L-threonyl-[protein] + ATP = O-phospho-L-threonyl-[protein] + ADP + H(+). Functionally, CIPK serine-threonine protein kinases interact with CBL proteins. Binding of a CBL protein to the regulatory NAF domain of CIPK protein lead to the activation of the kinase in a calcium-dependent manner. Downstream of CBL1, CBL2, CBL3 and CBL9, regulates by phosphorylation the K(+) conductance and uptake of AKT1. This chain is CBL-interacting serine/threonine-protein kinase 16 (CIPK16), found in Arabidopsis thaliana (Mouse-ear cress).